Reading from the N-terminus, the 386-residue chain is Succinyl-diaminopimelate desuccinylase (386 aa).

Zn(2+) is bound at residue His75. Residue Asp77 is part of the active site. Residue Asp108 coordinates Zn(2+). The active-site Proton acceptor is Glu138. 3 residues coordinate Zn(2+): Glu139, Glu167, and His356.

Belongs to the peptidase M20A family. DapE subfamily. As to quaternary structure, homodimer. The cofactor is Zn(2+). It depends on Co(2+) as a cofactor.

It catalyses the reaction N-succinyl-(2S,6S)-2,6-diaminopimelate + H2O = (2S,6S)-2,6-diaminopimelate + succinate. It participates in amino-acid biosynthesis; L-lysine biosynthesis via DAP pathway; LL-2,6-diaminopimelate from (S)-tetrahydrodipicolinate (succinylase route): step 3/3. Catalyzes the hydrolysis of N-succinyl-L,L-diaminopimelic acid (SDAP), forming succinate and LL-2,6-diaminopimelate (DAP), an intermediate involved in the bacterial biosynthesis of lysine and meso-diaminopimelic acid, an essential component of bacterial cell walls. In Caulobacter vibrioides (strain ATCC 19089 / CIP 103742 / CB 15) (Caulobacter crescentus), this protein is Succinyl-diaminopimelate desuccinylase.